Consider the following 994-residue polypeptide: Zinc finger protein basonuclin-1 (994 aa).

A disordered region spans residues 1 to 29; that stretch reads MRRRPPSRGGRGAARARETRRQPRHRSGR. Residues 240-249 form a hydrophobic region; that stretch reads MTFMLPFQFF. 2 consecutive C2H2-type zinc fingers follow at residues 357–380 and 385–414; these read VFCT…NAVH and HKCT…PRLH. 2 disordered regions span residues 402–425 and 444–472; these read RNRH…RDKD and TVTS…FPNI. The short motif at 533–539 is the Nuclear localization signal element; that stretch reads PKKKSRK. Residues Ser537 and Ser541 each carry the phosphoserine modification. The disordered stretch occupies residues 555-639; it reads NEKRHNLSSD…HNSERETEQT (85 aa). The segment covering 563-578 has biased composition (acidic residues); sequence SDEDMPLQVVSEDEQE. A compositionally biased stretch (basic and acidic residues) spans 603–614; that stretch reads PEGERPCHRESV. Positions 615–630 are enriched in polar residues; that stretch reads IESSGAISQTPEQATH. 2 consecutive C2H2-type zinc fingers follow at residues 720–743 and 748–775; these read FQCD…KNMH and HTCT…LNLH. Residues 859–877 show a composition bias toward low complexity; that stretch reads STTSSMKSESSSHSSWDSD. Residues 859-881 form a disordered region; the sequence is STTSSMKSESSSHSSWDSDGVSE. 2 consecutive C2H2-type zinc fingers follow at residues 928-951 and 956-983; these read ITCH…KTVH and HKCK…PNLH. Positions 970–994 are disordered; sequence VRSRNRHSQNPNLHKSLASSPSHLQ.

In terms of assembly, interacts with HSF2BP (via C-terminus). In terms of processing, phosphorylation on Ser-537 and Ser-541 leads to cytoplasmic localization. In epidermis, primarily detected in cells of the basal or immediately suprabasal layers (at protein level). In hair follicles, mainly expressed in the outer root sheath (at protein level). Expressed in epidermis, testis and foreskin, and to a lower extent in thymus, spleen, mammary glands, placenta, brain and heart. Expressed in the ovary, notably in oocytes.

The protein localises to the nucleus. It is found in the cytoplasm. It localises to the nucleoplasm. Functionally, transcriptional activator. It is likely involved in the regulation of keratinocytes terminal differentiation in squamous epithelia and hair follicles. Required for the maintenance of spermatogenesis. It is involved in the positive regulation of oocyte maturation, probably acting through the control of BMP15 levels and regulation of AKT signaling cascade. May also play a role in the early development of embryos. This Homo sapiens (Human) protein is Zinc finger protein basonuclin-1 (BNC1).